The following is a 280-amino-acid chain: Gem-associated protein 2 (280 aa).

The segment at 1–39 is may play a minor inhibitory role in snRNA binding to 5Sm (SNRPD1, SNRPD2, SNRPE, SNRPF and SNRPG) during snRNP assembly by inserting into the RNA binding pocket of 5Sm; it reads MRRAELAGLKTMAWVPAESAVEELMPRLLPVEPCDLTEG. A phosphoserine mark is found at serine 81 and serine 166.

It belongs to the gemin-2 family. Monomer. Part of the core SMN complex that contains SMN1, GEMIN2/SIP1, DDX20/GEMIN3, GEMIN4, GEMIN5, GEMIN6, GEMIN7, GEMIN8 and STRAP/UNRIP. Part of the SMN-Sm complex that contains SMN1, GEMIN2/SIP1, DDX20/GEMIN3, GEMIN4, GEMIN5, GEMIN6, GEMIN7, GEMIN8, STRAP/UNRIP and the Sm proteins SNRPB, SNRPD1, SNRPD2, SNRPD3, SNRPE, SNRPF and SNRPG. Interacts with GEMIN5; the interaction is direct. Interacts (via C-terminus) with SMN1; the interaction is direct. Interacts with SNRPD1; the interaction is direct. Interacts with SNRPD2; the interaction is direct. Interacts (via N-terminus) with SNRPF; the interaction is direct. Interacts (via N-terminus) with SNRPE; the interaction is direct. Interacts (via N-terminus) with SNRPG; the interaction is direct.

The protein localises to the nucleus. The protein resides in the gem. It localises to the cytoplasm. Its function is as follows. The SMN complex catalyzes the assembly of small nuclear ribonucleoproteins (snRNPs), the building blocks of the spliceosome, and thereby plays an important role in the splicing of cellular pre-mRNAs. Most spliceosomal snRNPs contain a common set of Sm proteins SNRPB, SNRPD1, SNRPD2, SNRPD3, SNRPE, SNRPF and SNRPG that assemble in a heptameric protein ring on the Sm site of the small nuclear RNA to form the core snRNP (Sm core). In the cytosol, the Sm proteins SNRPD1, SNRPD2, SNRPE, SNRPF and SNRPG (5Sm) are trapped in an inactive 6S pICln-Sm complex by the chaperone CLNS1A that controls the assembly of the core snRNP. To assemble core snRNPs, the SMN complex accepts the trapped 5Sm proteins from CLNS1A. Binding of snRNA inside 5Sm ultimately triggers eviction of the SMN complex, thereby allowing binding of SNRPD3 and SNRPB to complete assembly of the core snRNP. Within the SMN complex, GEMIN2 constrains the conformation of 5Sm, thereby promoting 5Sm binding to snRNA containing the snRNP code (a nonameric Sm site and a 3'-adjacent stem-loop), thus preventing progression of assembly until a cognate substrate is bound. This chain is Gem-associated protein 2, found in Homo sapiens (Human).